A 514-amino-acid chain; its full sequence is Respiratory nitrate reductase 2 beta chain (514 aa).

4Fe-4S ferredoxin-type domains follow at residues 7–35 (VGMVLNLDKCIGCHTCSVTCKNVWTGREG), 174–205 (TFMMYLPRLCEHCLNPSCVATCPSGAIYKREE), and 207–236 (GIVLIDQDKCRGWRLCISGCPYKKIYFNWK). [4Fe-4S] cluster-binding residues include Cys-16, Cys-19, Cys-22, Cys-26, Cys-183, Cys-186, and Cys-191. 3 residues coordinate [3Fe-4S] cluster: Cys-195, Cys-216, and Cys-222. [4Fe-4S] cluster is bound by residues Cys-226, Cys-243, Cys-246, Cys-258, and Cys-262.

As to quaternary structure, dimer of heterotrimers each composed of an alpha, a beta and a gamma chain. Alpha and beta are catalytic chains; gamma chains are involved in binding the enzyme complex to the cytoplasmic membrane. [4Fe-4S] cluster serves as cofactor. Requires [3Fe-4S] cluster as cofactor.

It localises to the cell membrane. It carries out the reaction nitrate + a quinol = a quinone + nitrite + H2O. Its function is as follows. This is a second nitrate reductase enzyme which can substitute for the NRA enzyme and allows E.coli to use nitrate as an electron acceptor during anaerobic growth. The beta chain is an electron transfer unit containing four cysteine clusters involved in the formation of iron-sulfur centers. Electrons are transferred from the gamma chain to the molybdenum cofactor of the alpha subunit. This Escherichia coli (strain K12) protein is Respiratory nitrate reductase 2 beta chain (narY).